A 275-amino-acid polypeptide reads, in one-letter code: MSAEVKVTGQNQEQFLLLAKSAKGAALATLIHQVLEAPGVYVFGELLDMPNVRELAESDFASTFRLLTVFAYGTYADYLAEARNLPPLTDAQKNKLRHLSVVTLAAKVKCIPYAVLLEALALRNVRQLEDLVIEAVYADVLRGSLDQRNQRLEVDYSIGRDIQRQDLSAIAQTLQEWCVGCEVVLSGIEEQVSRANQHKEQQLGLKQQIESEVANLKKTIKVTTAAAAAATSQDPEQHLTELREPASGTNQRQPSKKASKGKGLRGSAKIWSKSN.

Ser-2 is subject to N-acetylserine. Positions 2–159 (SAEVKVTGQN…QRLEVDYSIG (158 aa)) constitute a PCI domain. A coiled-coil region spans residues 185–233 (LSGIEEQVSRANQHKEQQLGLKQQIESEVANLKKTIKVTTAAAAAATSQ). The segment at 228–275 (AAATSQDPEQHLTELREPASGTNQRQPSKKASKGKGLRGSAKIWSKSN) is disordered. Positions 235–244 (PEQHLTELRE) are enriched in basic and acidic residues. Over residues 254-263 (PSKKASKGKG) the composition is skewed to basic residues.

Belongs to the CSN7/EIF3M family. CSN7 subfamily. Component of the CSN complex, composed of COPS1/GPS1, COPS2, COPS3, COPS4, COPS5, COPS6, COPS7 (COPS7A or COPS7B), COPS8 and COPS9. In the complex, it probably interacts directly with COPS1, COPS2, COPS4, COPS5, COPS6 and COPS8. Interacts with PMF1. Interacts with the translation initiation factor EIF3S6. Interacts with CK2 and PKD. Interacts directly with ID3. In terms of processing, phosphorylated by CK2 and PKD kinases.

It localises to the cytoplasm. Its subcellular location is the nucleus. Component of the COP9 signalosome complex (CSN), a complex involved in various cellular and developmental processes. The CSN complex is an essential regulator of the ubiquitin (Ubl) conjugation pathway by mediating the deneddylation of the cullin subunits of SCF-type E3 ligase complexes, leading to decrease the Ubl ligase activity of SCF-type complexes such as SCF, CSA or DDB2. The complex is also involved in phosphorylation of p53/TP53, JUN, I-kappa-B-alpha/NFKBIA, ITPK1 and IRF8/ICSBP, possibly via its association with CK2 and PKD kinases. CSN-dependent phosphorylation of TP53 and JUN promotes and protects degradation by the Ubl system, respectively. The sequence is that of COP9 signalosome complex subunit 7a (Cops7a) from Mus musculus (Mouse).